A 132-amino-acid polypeptide reads, in one-letter code: Profilin-1 (132 aa).

Belongs to the profilin family. In terms of assembly, occurs in many kinds of cells as a complex with monomeric actin in a 1:1 ratio.

It is found in the cytoplasm. It localises to the cytoskeleton. Binds to actin and affects the structure of the cytoskeleton. At high concentrations, profilin prevents the polymerization of actin, whereas it enhances it at low concentrations. By binding to PIP2, it inhibits the formation of IP3 and DG. This is Profilin-1 (PRO1) from Parietaria judaica (Pellitory-of-the-wall).